Here is a 492-residue protein sequence, read N- to C-terminus: Phosphatidylinositol 4-kinase type 2-beta (492 aa).

Over residues 1-11 (MEPKQTADARD) the composition is skewed to basic and acidic residues. The tract at residues 1-98 (MEPKQTADAR…SDRENMSGGH (98 aa)) is disordered. In terms of domain architecture, PI3K/PI4K catalytic spans 127–462 (GVFPERISQG…VQMPRVVVER (336 aa)). A G-loop region spans residues 133–139 (ISQGSSG). Residues serine 140 and lysine 155 each coordinate ATP. An important for substrate binding region spans residues 160 to 162 (EPY). Residues 168 to 181 (KWTKYFHKICCPCC) are important for interaction with membranes. ATP contacts are provided by residues 264–267 (QLFV) and 278–279 (RK). An important for interaction with membranes region spans residues 271–279 (KEADYWLRK). Positions 308–316 (RNTDRGNDN) are catalytic loop. The segment at 353–373 (AIDNGLAFPFKHPDEWRAYPF) is activation loop. Aspartate 355 serves as a coordination point for ATP. Residues 368 to 377 (WRAYPFHWAW) form an important for interaction with membranes region.

This sequence belongs to the PI3/PI4-kinase family. Type II PI4K subfamily.

Its subcellular location is the cytoplasm. The protein localises to the cytosol. The protein resides in the golgi apparatus membrane. It is found in the endoplasmic reticulum membrane. It localises to the cell membrane. Its subcellular location is the early endosome membrane. It carries out the reaction a 1,2-diacyl-sn-glycero-3-phospho-(1D-myo-inositol) + ATP = a 1,2-diacyl-sn-glycero-3-phospho-(1D-myo-inositol 4-phosphate) + ADP + H(+). In terms of biological role, contributes to the overall PI4-kinase activity of the cell. This contribution may be especially significant in plasma membrane, endosomal and Golgi compartments. The phosphorylation of phosphatidylinositol (PI) to PI4P is the first committed step in the generation of phosphatidylinositol 4,5-bisphosphate (PIP2), a precursor of the second messenger inositol 1,4,5-trisphosphate (InsP3). In Xenopus tropicalis (Western clawed frog), this protein is Phosphatidylinositol 4-kinase type 2-beta (pi4k2b).